Reading from the N-terminus, the 802-residue chain is Ribosomal protein S6 kinase alpha-5 (802 aa).

The span at 1 to 22 shows a compositional bias: gly residues; that stretch reads MEEEGGSSGGAAGTSADGGDGG. A disordered region spans residues 1-23; that stretch reads MEEEGGSSGGAAGTSADGGDGGE. One can recognise a Protein kinase 1 domain in the interval 49-318; that stretch reads FELLKVLGTG…ADEIKEHLFF (270 aa). ATP-binding positions include 55–63 and K81; that span reads LGTGAYGKV. Catalysis depends on D177, which acts as the Proton acceptor. Position 212 is a phosphoserine; by autocatalysis (S212). An AGC-kinase C-terminal domain is found at 319-387; that stretch reads QKINWDDLAA…VAPSILFKRN (69 aa). S360 is modified (phosphoserine; by MAPK1, MAPK3 and MAPK14). A phosphoserine; by autocatalysis mark is found at S376 and S381. Residues 426–687 enclose the Protein kinase 2 domain; sequence DLKDKPLGEG…MSGLRYNEWL (262 aa). Residues 432 to 440 and K455 contribute to the ATP site; that span reads LGEGSFSIC. D544 serves as the catalytic Proton acceptor. Phosphothreonine; by MAPK1, MAPK3 and MAPK14 is present on T581. Residues S647, S657, S691, and S695 each carry the phosphoserine modification. T700 carries the post-translational modification Phosphothreonine; by MAPK1, MAPK3 and MAPK14. Positions 741 to 802 are disordered; that stretch reads AKRRKMKKTS…TLFQFSDSVA (62 aa). Residues 749–779 show a composition bias toward low complexity; sequence TSTSTETRSSSSESSHSSSSHSHGKTTPTKT. S750, S752, and S758 each carry phosphoserine; by autocatalysis. Residues 780–802 show a composition bias toward polar residues; it reads LQPSNPADSNNPETLFQFSDSVA. S798 carries the post-translational modification Phosphoserine.

It belongs to the protein kinase superfamily. AGC Ser/Thr protein kinase family. S6 kinase subfamily. Forms a complex with either MAPK1/ERK2 or MAPK3/ERK1 in quiescent cells which transiently dissociates following mitogenic stimulation. Also associates with MAPK14/p38-alpha. Activated RPS6KA5 associates with and phosphorylates the NF-kappa-B p65 subunit RELA. Interacts with CREBBP and EP300. Requires Mg(2+) as cofactor. Post-translationally, ser-376 and Thr-581 phosphorylation is required for kinase activity. Ser-376 and Ser-212 are autophosphorylated by the C-terminal kinase domain, and their phosphorylation is essential for the catalytic activity of the N-terminal kinase domain. Phosphorylated at Ser-360, Thr-581 and Thr-700 by MAPK1/ERK2, MAPK3/ERK1 and MAPK14/p38-alpha. Autophosphorylated at Ser-750, Ser-752 and Ser-758 by the N-terminal kinase domain. Ubiquitinated. In terms of tissue distribution, widely expressed with high levels in heart, brain and placenta. Less abundant in lung, kidney and liver.

The protein localises to the nucleus. Its subcellular location is the cytoplasm. The enzyme catalyses L-seryl-[protein] + ATP = O-phospho-L-seryl-[protein] + ADP + H(+). It carries out the reaction L-threonyl-[protein] + ATP = O-phospho-L-threonyl-[protein] + ADP + H(+). With respect to regulation, activated by phosphorylation at Ser-360, Thr-581 and Thr-700 by MAPK1/ERK2, MAPK3/ERK1 and MAPK14/p38-alpha, and by further autophosphorylation of Ser-212, Ser-376 and Ser-381 by the activated C-terminal kinase domain. The active N-terminal kinase domain finally phosphorylates downstream substrates, as well as Ser-750, Ser-752 and Ser-758 in its own C-terminal region. In terms of biological role, serine/threonine-protein kinase that is required for the mitogen or stress-induced phosphorylation of the transcription factors CREB1 and ATF1 and for the regulation of the transcription factors RELA, STAT3 and ETV1/ER81, and that contributes to gene activation by histone phosphorylation and functions in the regulation of inflammatory genes. Phosphorylates CREB1 and ATF1 in response to mitogenic or stress stimuli such as UV-C irradiation, epidermal growth factor (EGF) and anisomycin. Plays an essential role in the control of RELA transcriptional activity in response to TNF and upon glucocorticoid, associates in the cytoplasm with the glucocorticoid receptor NR3C1 and contributes to RELA inhibition and repression of inflammatory gene expression. In skeletal myoblasts is required for phosphorylation of RELA at 'Ser-276' during oxidative stress. In erythropoietin-stimulated cells, is necessary for the 'Ser-727' phosphorylation of STAT3 and regulation of its transcriptional potential. Phosphorylates ETV1/ER81 at 'Ser-191' and 'Ser-216', and thereby regulates its ability to stimulate transcription, which may be important during development and breast tumor formation. Directly represses transcription via phosphorylation of 'Ser-1' of histone H2A. Phosphorylates 'Ser-10' of histone H3 in response to mitogenics, stress stimuli and EGF, which results in the transcriptional activation of several immediate early genes, including proto-oncogenes c-fos/FOS and c-jun/JUN. May also phosphorylate 'Ser-28' of histone H3. Mediates the mitogen- and stress-induced phosphorylation of high mobility group protein 1 (HMGN1/HMG14). In lipopolysaccharide-stimulated primary macrophages, acts downstream of the Toll-like receptor TLR4 to limit the production of pro-inflammatory cytokines. Functions probably by inducing transcription of the MAP kinase phosphatase DUSP1 and the anti-inflammatory cytokine interleukin 10 (IL10), via CREB1 and ATF1 transcription factors. Plays a role in neuronal cell death by mediating the downstream effects of excitotoxic injury. Phosphorylates TRIM7 at 'Ser-107' in response to growth factor signaling via the MEK/ERK pathway, thereby stimulating its ubiquitin ligase activity. The sequence is that of Ribosomal protein S6 kinase alpha-5 (RPS6KA5) from Homo sapiens (Human).